Here is a 233-residue protein sequence, read N- to C-terminus: Lipoprotein-releasing system ATP-binding protein LolD (233 aa).

The ABC transporter domain maps to 6–233 (LQCDNLCKRY…TAELSLMGAE (228 aa)). 42–49 (GSSGSGKS) serves as a coordination point for ATP.

This sequence belongs to the ABC transporter superfamily. Lipoprotein translocase (TC 3.A.1.125) family. The complex is composed of two ATP-binding proteins (LolD) and two transmembrane proteins (LolC and LolE).

It is found in the cell inner membrane. Part of the ABC transporter complex LolCDE involved in the translocation of mature outer membrane-directed lipoproteins, from the inner membrane to the periplasmic chaperone, LolA. Responsible for the formation of the LolA-lipoprotein complex in an ATP-dependent manner. This is Lipoprotein-releasing system ATP-binding protein LolD from Shigella dysenteriae serotype 1 (strain Sd197).